Here is a 352-residue protein sequence, read N- to C-terminus: Selenide, water dikinase (352 aa).

Cysteine 23 is a catalytic residue. Residues lysine 26 and 54-56 (SRD) each bind ATP. Position 57 (aspartate 57) interacts with Mg(2+). Residues aspartate 74, aspartate 97, and 145–147 (GHS) contribute to the ATP site. Aspartate 97 contacts Mg(2+). Aspartate 233 is a binding site for Mg(2+).

It belongs to the selenophosphate synthase 1 family. Class I subfamily. Homodimer. Mg(2+) serves as cofactor.

The enzyme catalyses hydrogenselenide + ATP + H2O = selenophosphate + AMP + phosphate + 2 H(+). In terms of biological role, synthesizes selenophosphate from selenide and ATP. In Shewanella baltica (strain OS185), this protein is Selenide, water dikinase.